A 457-amino-acid polypeptide reads, in one-letter code: tRNA-2-methylthio-N(6)-dimethylallyladenosine synthase (457 aa).

The region spanning Arg-19–His-134 is the MTTase N-terminal domain. Cys-28, Cys-64, Cys-98, Cys-172, Cys-176, and Cys-179 together coordinate [4Fe-4S] cluster. One can recognise a Radical SAM core domain in the interval Pro-158–Glu-390. The TRAM domain maps to Leu-393–Glu-456.

The protein belongs to the methylthiotransferase family. MiaB subfamily. As to quaternary structure, monomer. The cofactor is [4Fe-4S] cluster.

The protein resides in the cytoplasm. It carries out the reaction N(6)-dimethylallyladenosine(37) in tRNA + (sulfur carrier)-SH + AH2 + 2 S-adenosyl-L-methionine = 2-methylsulfanyl-N(6)-dimethylallyladenosine(37) in tRNA + (sulfur carrier)-H + 5'-deoxyadenosine + L-methionine + A + S-adenosyl-L-homocysteine + 2 H(+). Its function is as follows. Catalyzes the methylthiolation of N6-(dimethylallyl)adenosine (i(6)A), leading to the formation of 2-methylthio-N6-(dimethylallyl)adenosine (ms(2)i(6)A) at position 37 in tRNAs that read codons beginning with uridine. The chain is tRNA-2-methylthio-N(6)-dimethylallyladenosine synthase from Parabacteroides distasonis (strain ATCC 8503 / DSM 20701 / CIP 104284 / JCM 5825 / NCTC 11152).